The following is a 97-amino-acid chain: Co-chaperonin GroES (97 aa).

Belongs to the GroES chaperonin family. Heptamer of 7 subunits arranged in a ring. Interacts with the chaperonin GroEL.

Its subcellular location is the cytoplasm. Together with the chaperonin GroEL, plays an essential role in assisting protein folding. The GroEL-GroES system forms a nano-cage that allows encapsulation of the non-native substrate proteins and provides a physical environment optimized to promote and accelerate protein folding. GroES binds to the apical surface of the GroEL ring, thereby capping the opening of the GroEL channel. The sequence is that of Co-chaperonin GroES from Yersinia enterocolitica.